A 23-amino-acid chain; its full sequence is Retinol-binding protein 3 (23 aa).

The protein localises to the secreted. The protein resides in the extracellular space. It localises to the extracellular matrix. Its subcellular location is the interphotoreceptor matrix. Its function is as follows. IRBP shuttles 11-cis and all trans retinoids between the retinol isomerase in the pigment epithelium and the visual pigments in the photoreceptor cells of the retina. The protein is Retinol-binding protein 3 (RBP3) of Oryctolagus cuniculus (Rabbit).